We begin with the raw amino-acid sequence, 250 residues long: Geranylgeranylglyceryl phosphate synthase (250 aa).

2 residues coordinate Mg(2+): aspartate 23 and serine 52. Residues 170–176 (YIEAGSG), 202–203 (GG), and 224–225 (GT) contribute to the sn-glycerol 1-phosphate site.

This sequence belongs to the GGGP/HepGP synthase family. Group II subfamily. The cofactor is Mg(2+).

It is found in the cytoplasm. The catalysed reaction is sn-glycerol 1-phosphate + (2E,6E,10E)-geranylgeranyl diphosphate = sn-3-O-(geranylgeranyl)glycerol 1-phosphate + diphosphate. It participates in membrane lipid metabolism; glycerophospholipid metabolism. Functionally, prenyltransferase that catalyzes the transfer of the geranylgeranyl moiety of geranylgeranyl diphosphate (GGPP) to the C3 hydroxyl of sn-glycerol-1-phosphate (G1P). This reaction is the first ether-bond-formation step in the biosynthesis of archaeal membrane lipids. The sequence is that of Geranylgeranylglyceryl phosphate synthase from Methanobrevibacter smithii (strain ATCC 35061 / DSM 861 / OCM 144 / PS).